The primary structure comprises 446 residues: MEGAEGQEELDWEALYLRLPLQNCSWNSTGWEPNWNVTVVPNTTWWQASAPFDTPAALVRAAAKAVVLGLLILATVVGNVFVIAAILLERHLRSAANNLILSLAVADLLVACLVMPLGAVYEVVQRWTLGPELCDMWTSGDVLCCTASILHLVAIALDRYWAVTNIDYIHASTAKRVGMMIACVWTVSFFVCIAQLLGWKDPDWNQRVSEDLRCVVSQDVGYQIFATASSFYVPVLIILILYWRIYQTARKRIRRRRGATARGGVGPPPVPAGGALVAGGGSGGIAAAVVAVIGRPLPTISETTTTGFTNVSSNNTSPEKQSCANGLEADPPTTGYGAVAAAYYPSLVRRKPKEAADSKRERKAAKTLAIITGAFVACWLPFFVLAILVPTCDCEVSPVLTSLSLWLGYFNSTLNPVIYTVFSPEFRHAFQRLLCGRRVRRRRAPQ.

Over Met-1 to Ala-65 the chain is Extracellular. N-linked (GlcNAc...) asparagine glycosylation is found at Asn-23, Asn-27, Asn-36, and Asn-42. A helical membrane pass occupies residues Val-66–Leu-88. Over Glu-89–Asn-98 the chain is Cytoplasmic. Residues Leu-99–Val-120 traverse the membrane as a helical segment. Topologically, residues Tyr-121–Asp-135 are extracellular. A disulfide bridge links Cys-134 with Cys-214. The chain crosses the membrane as a helical span at residues Met-136 to Leu-157. Over Asp-158–Arg-176 the chain is Cytoplasmic. Residues Val-177–Trp-199 traverse the membrane as a helical segment. The Extracellular portion of the chain corresponds to Lys-200 to Thr-227. A helical membrane pass occupies residues Ala-228–Ala-249. The Cytoplasmic segment spans residues Arg-250–Thr-367. Residues Thr-304 to Ala-324 are compositionally biased toward polar residues. The interval Thr-304 to Ala-329 is disordered. A helical transmembrane segment spans residues Leu-368 to Thr-391. Over Cys-392–Val-399 the chain is Extracellular. The helical transmembrane segment at Leu-400 to Phe-422 threads the bilayer. The Cytoplasmic portion of the chain corresponds to Ser-423–Gln-446.

This sequence belongs to the G-protein coupled receptor 1 family.

The protein localises to the cell membrane. This is a receptor for 5-hydroxytryptamine (serotonin), a biogenic hormone that function as a neurotransmitter, a hormone, and a mitogen. This chain is 5-hydroxytryptamine receptor, found in Bombyx mori (Silk moth).